A 478-amino-acid chain; its full sequence is PRAME family member 26 (478 aa).

The stretch at 99–126 is one LRR 1; degenerate repeat; the sequence is RWKLQVLDLQDVCENFWMVWSEAMARGC. The LRR 2; degenerate repeat unit spans residues 181–205; the sequence is HLCCKKLKILGMPFRNIRSILKMVN. Residues 206–232 form an LRR 3; degenerate repeat; it reads LDCIQEVEVNCKWVLPILTQFTPYLGH. The stretch at 233–268 is one LRR 4; degenerate repeat; sequence MRNLQKLVLSHMDVSRYVSPEQKKEIVTQFTTQFLK. LRR repeat units follow at residues 269–294, 295–326, 327–347, 351–378, and 379–403; these read LHCL…LSCL, KTSL…SQLK, TLDL…QILL, AATL…ALSR, and CFEL…LLSH.

Belongs to the PRAME family.

This Homo sapiens (Human) protein is PRAME family member 26.